Reading from the N-terminus, the 198-residue chain is NAD(P)H dehydrogenase (quinone) (198 aa).

The Flavodoxin-like domain maps to valine 4–valine 189. FMN is bound by residues serine 10 to isoleucine 15 and threonine 78 to phenylalanine 80. Tyrosine 12 is an NAD(+) binding site. Residue tryptophan 98 coordinates substrate. FMN-binding positions include serine 113–glycine 118 and histidine 133.

The protein belongs to the WrbA family. FMN is required as a cofactor.

The catalysed reaction is a quinone + NADH + H(+) = a quinol + NAD(+). It carries out the reaction a quinone + NADPH + H(+) = a quinol + NADP(+). In Escherichia coli (strain SE11), this protein is NAD(P)H dehydrogenase (quinone).